Consider the following 185-residue polypeptide: Large ribosomal subunit protein uL5 (185 aa).

It belongs to the universal ribosomal protein uL5 family. Part of the 50S ribosomal subunit; part of the 5S rRNA/L5/L18/L25 subcomplex. Contacts the 5S rRNA and the P site tRNA. Forms a bridge to the 30S subunit in the 70S ribosome.

This is one of the proteins that bind and probably mediate the attachment of the 5S RNA into the large ribosomal subunit, where it forms part of the central protuberance. In the 70S ribosome it contacts protein S13 of the 30S subunit (bridge B1b), connecting the 2 subunits; this bridge is implicated in subunit movement. Contacts the P site tRNA; the 5S rRNA and some of its associated proteins might help stabilize positioning of ribosome-bound tRNAs. This Streptomyces avermitilis (strain ATCC 31267 / DSM 46492 / JCM 5070 / NBRC 14893 / NCIMB 12804 / NRRL 8165 / MA-4680) protein is Large ribosomal subunit protein uL5.